A 105-amino-acid polypeptide reads, in one-letter code: Met repressor (105 aa).

It belongs to the MetJ family. As to quaternary structure, homodimer.

The protein resides in the cytoplasm. In terms of biological role, this regulatory protein, when combined with SAM (S-adenosylmethionine) represses the expression of the methionine regulon and of enzymes involved in SAM synthesis. This Vibrio cholerae serotype O1 (strain ATCC 39541 / Classical Ogawa 395 / O395) protein is Met repressor.